The chain runs to 188 residues: Elongation factor P (188 aa).

Belongs to the elongation factor P family.

It is found in the cytoplasm. It participates in protein biosynthesis; polypeptide chain elongation. Involved in peptide bond synthesis. Stimulates efficient translation and peptide-bond synthesis on native or reconstituted 70S ribosomes in vitro. Probably functions indirectly by altering the affinity of the ribosome for aminoacyl-tRNA, thus increasing their reactivity as acceptors for peptidyl transferase. The polypeptide is Elongation factor P (Aeromonas salmonicida (strain A449)).